We begin with the raw amino-acid sequence, 166 residues long: Ribosome maturation factor RimM (166 aa).

One can recognise a PRC barrel domain in the interval 94–165; the sequence is EGEYYLGKLI…TIELKVLDLL (72 aa).

The protein belongs to the RimM family. As to quaternary structure, binds ribosomal protein uS19.

The protein localises to the cytoplasm. Its function is as follows. An accessory protein needed during the final step in the assembly of 30S ribosomal subunit, possibly for assembly of the head region. Essential for efficient processing of 16S rRNA. May be needed both before and after RbfA during the maturation of 16S rRNA. It has affinity for free ribosomal 30S subunits but not for 70S ribosomes. The polypeptide is Ribosome maturation factor RimM (Borrelia garinii subsp. bavariensis (strain ATCC BAA-2496 / DSM 23469 / PBi) (Borreliella bavariensis)).